The primary structure comprises 184 residues: Ribosome-recycling factor (184 aa).

Belongs to the RRF family.

Its subcellular location is the cytoplasm. Responsible for the release of ribosomes from messenger RNA at the termination of protein biosynthesis. May increase the efficiency of translation by recycling ribosomes from one round of translation to another. The polypeptide is Ribosome-recycling factor (Thermoanaerobacter pseudethanolicus (strain ATCC 33223 / 39E) (Clostridium thermohydrosulfuricum)).